A 338-amino-acid polypeptide reads, in one-letter code: Ketol-acid reductoisomerase (NADP(+)) (338 aa).

In terms of domain architecture, KARI N-terminal Rossmann spans Met-1 to Thr-181. NADP(+) contacts are provided by residues Phe-24–Gln-27, Lys-47, Ser-50, Ser-52, and Asp-82–Gln-85. His-107 is an active-site residue. Gly-133 contributes to the NADP(+) binding site. Residues Asn-182–Leu-327 form the KARI C-terminal knotted domain. 4 residues coordinate Mg(2+): Asp-190, Glu-194, Glu-226, and Glu-230. Position 251 (Ser-251) interacts with substrate.

The protein belongs to the ketol-acid reductoisomerase family. Mg(2+) is required as a cofactor.

The catalysed reaction is (2R)-2,3-dihydroxy-3-methylbutanoate + NADP(+) = (2S)-2-acetolactate + NADPH + H(+). The enzyme catalyses (2R,3R)-2,3-dihydroxy-3-methylpentanoate + NADP(+) = (S)-2-ethyl-2-hydroxy-3-oxobutanoate + NADPH + H(+). It participates in amino-acid biosynthesis; L-isoleucine biosynthesis; L-isoleucine from 2-oxobutanoate: step 2/4. Its pathway is amino-acid biosynthesis; L-valine biosynthesis; L-valine from pyruvate: step 2/4. Its function is as follows. Involved in the biosynthesis of branched-chain amino acids (BCAA). Catalyzes an alkyl-migration followed by a ketol-acid reduction of (S)-2-acetolactate (S2AL) to yield (R)-2,3-dihydroxy-isovalerate. In the isomerase reaction, S2AL is rearranged via a Mg-dependent methyl migration to produce 3-hydroxy-3-methyl-2-ketobutyrate (HMKB). In the reductase reaction, this 2-ketoacid undergoes a metal-dependent reduction by NADPH to yield (R)-2,3-dihydroxy-isovalerate. This Chloroherpeton thalassium (strain ATCC 35110 / GB-78) protein is Ketol-acid reductoisomerase (NADP(+)).